A 786-amino-acid chain; its full sequence is LPS-assembly protein LptD (786 aa).

Residues 1–39 form the signal peptide; sequence MPPKPLFPNVFPGDGAPRKRRLALALLAVPGLVPAVSYA.

It belongs to the LptD family. Component of the lipopolysaccharide transport and assembly complex. Interacts with LptE and LptA.

It is found in the cell outer membrane. Together with LptE, is involved in the assembly of lipopolysaccharide (LPS) at the surface of the outer membrane. In Burkholderia ambifaria (strain ATCC BAA-244 / DSM 16087 / CCUG 44356 / LMG 19182 / AMMD) (Burkholderia cepacia (strain AMMD)), this protein is LPS-assembly protein LptD.